The primary structure comprises 1044 residues: AT-rich interactive domain-containing protein 5B (1044 aa).

Disordered stretches follow at residues 143 to 211 (PRKK…GDEC), 301 to 350 (RFTK…GDKD), 363 to 392 (MEEL…LTED), 554 to 591 (NNYP…SSVE), 603 to 672 (QHAQ…SFLS), 733 to 767 (SQKE…LSTS), 811 to 835 (VSAS…RGEE), and 884 to 912 (TPLH…KPAE). Composition is skewed to basic and acidic residues over residues 197–211 (VQSE…GDEC), 301–310 (RFTKGEEDKP), and 337–350 (RPKD…GDKD). The 93-residue stretch at 212–304 (RTDEQAFLVA…LILPYERFTK (93 aa)) folds into the ARID domain. A compositionally biased stretch (polar residues) spans 369–380 (KQNSQQLQAPTQ). Residues 565–591 (VSRRLSSSGTEVSSAGQSSSQVSSSVE) are compositionally biased toward low complexity. Basic and acidic residues-rich tracts occupy residues 611-635 (RGSE…EPVH), 644-660 (PYLK…KSAE), and 733-746 (SQKE…RVTE). A compositionally biased stretch (low complexity) spans 752 to 767 (LSLPKSSPLKLPLSTS). Composition is skewed to basic and acidic residues over residues 816–826 (KVTESHSKVLE) and 894–909 (LPGK…ESVK).

This sequence belongs to the ARID5B family.

Its subcellular location is the nucleus. Transcription coactivator that binds to the 5'-AATA[CT]-3' core sequence and plays a key role in adipogenesis and liver development. Required for adipogenesis: regulates triglyceride metabolism in adipocytes by regulating expression of adipogenic genes. The sequence is that of AT-rich interactive domain-containing protein 5B (arid5b) from Danio rerio (Zebrafish).